The following is a 167-amino-acid chain: Peptide deformylase (167 aa).

2 residues coordinate Fe cation: cysteine 91 and histidine 133. Residue glutamate 134 is part of the active site. Residue histidine 137 participates in Fe cation binding.

This sequence belongs to the polypeptide deformylase family. Requires Fe(2+) as cofactor.

It catalyses the reaction N-terminal N-formyl-L-methionyl-[peptide] + H2O = N-terminal L-methionyl-[peptide] + formate. Removes the formyl group from the N-terminal Met of newly synthesized proteins. Requires at least a dipeptide for an efficient rate of reaction. N-terminal L-methionine is a prerequisite for activity but the enzyme has broad specificity at other positions. This is Peptide deformylase from Buchnera aphidicola subsp. Schizaphis graminum (strain Sg).